The sequence spans 101 residues: Acylphosphatase (101 aa).

Positions Arg15 to Tyr101 constitute an Acylphosphatase-like domain. Residues Arg30 and Asn48 contribute to the active site.

Belongs to the acylphosphatase family.

The enzyme catalyses an acyl phosphate + H2O = a carboxylate + phosphate + H(+). This is Acylphosphatase (acyP) from Saccharolobus solfataricus (strain ATCC 35092 / DSM 1617 / JCM 11322 / P2) (Sulfolobus solfataricus).